We begin with the raw amino-acid sequence, 257 residues long: MLILAGLGLYDENDMTLKTLKFAKKAEKIYAEFYTAVLTGTTTEKIEEVLGKKIHVLSRKDVEYNGYKLIEEAKDKDIMFLTAGDPMVATTHVDLAIEAKKKGIEVLIINAPSIYSAVGITGLQLYKFGKTTSIVFPEENYFPETPYNVIKENLERGLHTLCLLDIRIDENEKRFMTANEGLKVLLELENRKKEGIINEDTKAVVVARAGSLKPKLVYGKIKDLINYDFGEPLHCIIIPGKLHFMEEDALKYLCENI.

S-adenosyl-L-methionine-binding positions include L9, D85, V88, 113 to 114 (SI), L164, A209, and H234.

Belongs to the diphthine synthase family. As to quaternary structure, homodimer.

It carries out the reaction 2-[(3S)-amino-3-carboxypropyl]-L-histidyl-[translation elongation factor 2] + 3 S-adenosyl-L-methionine = diphthine-[translation elongation factor 2] + 3 S-adenosyl-L-homocysteine + 3 H(+). It functions in the pathway protein modification; peptidyl-diphthamide biosynthesis. Its function is as follows. S-adenosyl-L-methionine-dependent methyltransferase that catalyzes the trimethylation of the amino group of the modified target histidine residue in translation elongation factor 2 (EF-2), to form an intermediate called diphthine. The three successive methylation reactions represent the second step of diphthamide biosynthesis. In Methanocaldococcus jannaschii (strain ATCC 43067 / DSM 2661 / JAL-1 / JCM 10045 / NBRC 100440) (Methanococcus jannaschii), this protein is Diphthine synthase.